Consider the following 436-residue polypeptide: Two-pore potassium channel 3 (436 aa).

The Cytoplasmic portion of the chain corresponds to 1-148 (MANEGSDPLL…QKDPTETSRS (148 aa)). The segment at 62–117 (SHFIDSMKQPSPSSSSTAVNNPFSDSSTLDPLLPPPPPQPEPWLSDQTSSHCQGHA) is disordered. A compositionally biased stretch (low complexity) spans 71 to 92 (PSPSSSSTAVNNPFSDSSTLDP). Over residues 93 to 102 (LLPPPPPQPE) the composition is skewed to pro residues. The chain crosses the membrane as a helical span at residues 149–169 (VVRQAFALLVVYLSLGVLIYW). An intramembrane region (pore-forming) is located at residues 185–204 (DGLYFCIVTMCTIGYGDITP). A helical membrane pass occupies residues 212–232 (FSIMFVLVGFGFIDILLSGMV). Residues 233 to 274 (SYVLDLQESYMLDSAKRRDEPEKRRSYIIDVKKGRMRIRLKV) are Cytoplasmic-facing. A helical transmembrane segment spans residues 275–295 (ALALGVVVLCIAVGVGIMHFI). Residues 302–321 (DSFYLSVMSVTTVGYGDRAF) constitute an intramembrane region (pore-forming). The chain crosses the membrane as a helical span at residues 328–348 (LFAAIWLLVSTLAVARAFLYL). At 349–436 (AEARVDKRNR…LDLLEGGSGD (88 aa)) the chain is on the cytoplasmic side. 2 consecutive EF-hand domains span residues 365–400 (LCET…EMEK) and 404–436 (KDIL…GSGD). 9 residues coordinate Ca(2+): aspartate 378, aspartate 380, asparagine 382, cysteine 384, glutamate 389, aspartate 417, asparagine 421, lysine 423, and aspartate 428.

This sequence belongs to the two pore domain potassium channel (TC 1.A.1.7) family. In terms of assembly, homodimer. In terms of tissue distribution, expressed in roots, cotyledons, stems, hypocotyls, leaves and flowers. Detected in root tips and in mesophyll cells and guard cells of the leaves.

Its subcellular location is the vacuole membrane. It is found in the plastid. The protein resides in the chloroplast thylakoid membrane. Inhibited by barium, but not by tetraethylammonium. In terms of biological role, two-pore potassium channel modulating the proton motive force (pmf) necessary to convert photochemical energy into physiological functions. Mediates the potassium efflux from the thylakoid lumen required for the regulation of the transmembrane electrical potential, the enhancement of the pH gradient for ATP synthesis, the regulation of electron flow, and pH-mediated photoprotective responses. Requires calcium for channel activity. In Arabidopsis thaliana (Mouse-ear cress), this protein is Two-pore potassium channel 3.